The sequence spans 354 residues: Green-sensitive opsin-3 (354 aa).

The Extracellular portion of the chain corresponds to 1 to 39 (MSGLNGFEGDNFYIPMSNRTGLVRDPFVYEQYYLAEPWQ). Asparagine 18 carries an N-linked (GlcNAc...) asparagine glycan. A helical transmembrane segment spans residues 40 to 64 (FKLLACYMFFLICLGLPINGFTLFV). Topologically, residues 65–76 (TAQHKKLQQPLN) are cytoplasmic. The chain crosses the membrane as a helical span at residues 77–102 (FILVNLAVAGMIMVCFGFTITISSAV). Residues 103–116 (NGYFYFGPTACAIE) lie on the Extracellular side of the membrane. Cysteine 113 and cysteine 190 are joined by a disulfide. Residues 117-136 (GFMATLGGEVALWSLVVLAI) traverse the membrane as a helical segment. The Cytoplasmic segment spans residues 137–155 (ERYIVVCKPMGSFKFSASH). The helical transmembrane segment at 156-179 (ALGGIGFTWFMAMTCAAPPLVGWS) threads the bilayer. The Extracellular portion of the chain corresponds to 180 to 205 (RYIPEGLQCSCGPDYYTLNPKYNNES). Asparagine 203 carries an N-linked (GlcNAc...) asparagine glycan. A helical transmembrane segment spans residues 206-233 (YVIYMFVVHFIVPVTVIFFTYGRLVCTV). Over 234–255 (KSAAAAQQDSASTQKAEKEVTR) the chain is Cytoplasmic. A helical transmembrane segment spans residues 256 to 279 (MVILMVVGFLVAWTPYATVAAWIF). Topologically, residues 280–287 (FNKGAAFT) are extracellular. A helical membrane pass occupies residues 288 to 312 (AQFMAVPAFFSKSSALFNPIIYVLL). Lysine 299 is subject to N6-(retinylidene)lysine. The Cytoplasmic portion of the chain corresponds to 313–354 (NKQFRNCMLTTLFCGKNPLGDEESSTVSTKTEVSTVSSVSPA).

Belongs to the G-protein coupled receptor 1 family. Opsin subfamily. In terms of tissue distribution, the color pigments are found in the cone photoreceptor cells.

It is found in the membrane. In terms of biological role, visual pigments are the light-absorbing molecules that mediate vision. They consist of an apoprotein, opsin, covalently linked to cis-retinal. This is Green-sensitive opsin-3 (RH11) from Psalidodon fasciatus (Banded astyanax).